Here is a 94-residue protein sequence, read N- to C-terminus: UPF0235 protein TK0768 (94 aa).

It belongs to the UPF0235 family.

The protein is UPF0235 protein TK0768 of Thermococcus kodakarensis (strain ATCC BAA-918 / JCM 12380 / KOD1) (Pyrococcus kodakaraensis (strain KOD1)).